A 184-amino-acid chain; its full sequence is Ribosome-recycling factor (184 aa).

This sequence belongs to the RRF family.

It localises to the cytoplasm. Functionally, responsible for the release of ribosomes from messenger RNA at the termination of protein biosynthesis. May increase the efficiency of translation by recycling ribosomes from one round of translation to another. The sequence is that of Ribosome-recycling factor from Leptospira borgpetersenii serovar Hardjo-bovis (strain JB197).